Here is a 108-residue protein sequence, read N- to C-terminus: Cell division protein FtsL (108 aa).

At 1–24 the chain is on the cytoplasmic side; sequence MSKDTASQPSLTKLIGLDIFGVGR. A helical transmembrane segment spans residues 25–45; it reads LHAILLICIFLSAIGVVLATH. Topologically, residues 46-108 are periplasmic; sequence NTRQMTVQRE…PDKEVIIKLR (63 aa).

Belongs to the FtsL family. As to quaternary structure, part of a complex composed of FtsB, FtsL and FtsQ.

Its subcellular location is the cell inner membrane. Essential cell division protein. May link together the upstream cell division proteins, which are predominantly cytoplasmic, with the downstream cell division proteins, which are predominantly periplasmic. The sequence is that of Cell division protein FtsL from Aliivibrio fischeri (strain ATCC 700601 / ES114) (Vibrio fischeri).